The sequence spans 145 residues: Neutral phospholipase A2 paradoxin-like beta chain (145 aa).

Residues 1–27 (MHPAHLLVLLAVCVSLLGASDIPPLPL) form the signal peptide. Intrachain disulfides connect C38-C98, C54-C144, C56-C72, C71-C125, C78-C118, C87-C111, and C105-C116.

This sequence belongs to the phospholipase A2 family. Group I subfamily. N49 sub-subfamily. As to quaternary structure, heterotrimer of alpha, beta, and gamma chains; non-covalently linked. Expressed by the venom gland.

The protein localises to the secreted. Functionally, heterotrimer: Snake venom phospholipase A2 (PLA2) heterotrimer that acts as a potent presynaptic neurotoxin by blocking synaptic transmission and synaptic vesicle recycling. May act by binding in a calcium-dependent fashion to neurotonal pentraxin-1 (NPTX1) and neurotonal pentraxin-2 (NPTX2), but not to neuronal pentraxin receptor (NPTXR). Also binds to taipoxin-associated calcium binding protein 49 (RCN2), a protein localized in the lumen of endoplasmic reticulum. In terms of biological role, monomer (beta chain): Snake venom phospholipase A2 homolog that is neither toxic nor enzymatically active. Does not bind calcium. This is Neutral phospholipase A2 paradoxin-like beta chain from Oxyuranus microlepidotus (Inland taipan).